Reading from the N-terminus, the 218-residue chain is Protein GrpE (218 aa).

2 stretches are compositionally biased toward basic and acidic residues: residues 1–13 and 20–32; these read MSKNNENIKHQNN and VDKKETKNHNKQE. The tract at residues 1 to 32 is disordered; the sequence is MSKNNENIKHQNNDKVNNQVDKKETKNHNKQE.

This sequence belongs to the GrpE family. In terms of assembly, homodimer.

The protein resides in the cytoplasm. In terms of biological role, participates actively in the response to hyperosmotic and heat shock by preventing the aggregation of stress-denatured proteins, in association with DnaK and GrpE. It is the nucleotide exchange factor for DnaK and may function as a thermosensor. Unfolded proteins bind initially to DnaJ; upon interaction with the DnaJ-bound protein, DnaK hydrolyzes its bound ATP, resulting in the formation of a stable complex. GrpE releases ADP from DnaK; ATP binding to DnaK triggers the release of the substrate protein, thus completing the reaction cycle. Several rounds of ATP-dependent interactions between DnaJ, DnaK and GrpE are required for fully efficient folding. This Ureaplasma parvum serovar 3 (strain ATCC 27815 / 27 / NCTC 11736) protein is Protein GrpE.